The following is a 323-amino-acid chain: Fructose-1,6-bisphosphatase class 1 (323 aa).

Residues Glu90, Asp111, Leu113, and Asp114 each contribute to the Mg(2+) site. Substrate is bound by residues 114–117 (DGSS), Tyr222, and Lys253. Glu259 contributes to the Mg(2+) binding site.

It belongs to the FBPase class 1 family. Homotetramer. It depends on Mg(2+) as a cofactor.

It is found in the cytoplasm. The enzyme catalyses beta-D-fructose 1,6-bisphosphate + H2O = beta-D-fructose 6-phosphate + phosphate. Its pathway is carbohydrate biosynthesis; gluconeogenesis. This Pelobacter propionicus (strain DSM 2379 / NBRC 103807 / OttBd1) protein is Fructose-1,6-bisphosphatase class 1.